The sequence spans 491 residues: Putative ABC transporter ATP-binding protein TDE_0906 (491 aa).

ABC transporter domains follow at residues 2 to 241 (INLN…KQGL) and 267 to 491 (LTLH…KERL). ATP-binding positions include 36 to 43 (GKSGCGKT) and 300 to 307 (GKNGCGKT).

Belongs to the ABC transporter superfamily.

The protein resides in the cell inner membrane. Functionally, probably part of an ABC transporter complex. Responsible for energy coupling to the transport system. The sequence is that of Putative ABC transporter ATP-binding protein TDE_0906 from Treponema denticola (strain ATCC 35405 / DSM 14222 / CIP 103919 / JCM 8153 / KCTC 15104).